Reading from the N-terminus, the 167-residue chain is Cytochrome c-type biogenesis protein CcmE (167 aa).

Topologically, residues 1–7 (MTRKQRR) are cytoplasmic. The chain crosses the membrane as a helical; Signal-anchor for type II membrane protein span at residues 8-28 (LLMIGGAGVVLIVAVGLVLNA). Residues 29-167 (LRDSIVFFST…TSANAAEGGK (139 aa)) are Periplasmic-facing. Heme is bound by residues His122 and Tyr126. Basic and acidic residues predominate over residues 137–150 (KDGHWKDDYGKKSP). Residues 137 to 167 (KDGHWKDDYGKKSPGETTAGQTSANAAEGGK) are disordered. Polar residues predominate over residues 151–161 (GETTAGQTSAN).

It belongs to the CcmE/CycJ family.

The protein localises to the cell inner membrane. Heme chaperone required for the biogenesis of c-type cytochromes. Transiently binds heme delivered by CcmC and transfers the heme to apo-cytochromes in a process facilitated by CcmF and CcmH. The chain is Cytochrome c-type biogenesis protein CcmE from Rhodopseudomonas palustris (strain ATCC BAA-98 / CGA009).